The chain runs to 643 residues: Probable extracellular metalloproteinase 4 (643 aa).

The first 18 residues, 1 to 18, serve as a signal peptide directing secretion; it reads MHGLLLAGLLALPLNVFA. The propeptide occupies 19 to 254; that stretch reads HPTESHSSGV…VHSVVDYVSA (236 aa). The segment at 49 to 69 is disordered; it reads SDAVPKQDGESFTTSSTGDDN. Residues 58–69 show a composition bias toward polar residues; that stretch reads ESFTTSSTGDDN. 2 N-linked (GlcNAc...) asparagine glycosylation sites follow: Asn271 and Asn420. His437 lines the Zn(2+) pocket. Glu438 is an active-site residue. His441 contributes to the Zn(2+) binding site. N-linked (GlcNAc...) asparagine glycosylation is found at Asn603 and Asn629.

It belongs to the peptidase M36 family. Zn(2+) is required as a cofactor.

It localises to the secreted. Functionally, secreted metalloproteinase probably acting as a virulence factor. In Trichophyton verrucosum (strain HKI 0517), this protein is Probable extracellular metalloproteinase 4 (MEP4).